The sequence spans 211 residues: Protein Nef (211 aa).

The N-myristoyl glycine; by host moiety is linked to residue G2. Residue S6 is modified to Phosphoserine; by host. The segment at 67-70 (EDEE) is acidic; interacts with host PACS1 and PACS2; stabilizes the interaction of NEF/MHC-I with host AP1M1; necessary for MHC-I internalization. The tract at residues 74–83 (PVRPQVPLRP) is SH3-binding; interaction with Src family tyrosine kinases. The PxxP; stabilizes the interaction of NEF/MHC-I with host AP1M1; necessary for MHC-I internalization signature appears at 77–80 (PQVP). A mediates dimerization, Nef-PTE1 interaction region spans residues 113–129 (DILDLWVYHTQGYFPDW). The segment at 153 to 185 (MDPDQVEEANEGENNSLLHPISLHGMDDPEKEV) is binding to ATP6V1H. Positions 169-170 (LL) match the Dileucine internalization motif; necessary for CD4 internalization motif. Positions 179–180 (DD) match the Diacidic; necessary for CD4 internalization motif.

Belongs to the lentivirus primate group Nef protein family. Monomer; cytosolic form. Homodimer; membrane bound form. Interacts with Nef associated p21-activated kinase (PAK2); this interaction activates PAK2. Associates with the Nef-MHC-I-AP1 complex; this complex is required for MHC-I internalization. Interacts (via C-terminus) with host PI3-kinase. Interacts with host PACS1; this interaction seems to be weak. Interacts with host PACS2. Interacts with host LCK and MAPK3; these interactions inhibit the kinase activity of the latter. Interacts with host ATP6V1H; this interaction may play a role in CD4 endocytosis. Associates with the CD4-Nef-AP2 complex; this complex is required for CD4 internalization. Interacts with host AP2 subunit alpha and AP2 subunit sigma2. Interacts with TCR-zeta chain; this interaction up-regulates the Fas ligand (FasL) surface expression. Interacts with host HCK, LYN, and SRC; these interactions activate the Src family kinases. Interacts with MAP3K5; this interaction inhibits the Fas and TNFR-mediated death signals. Interacts with beta-COP and PTE1. Interacts with human RACK1; this increases Nef phosphorylation by PKC. Interacts with TP53; this interaction decreases the half-life of TP53, protecting the infected cell against p53-mediated apoptosis. Post-translationally, the virion-associated Nef proteins are cleaved by the viral protease to release the soluble C-terminal core protein. Nef is probably cleaved concomitantly with viral structural proteins on maturation of virus particles. Myristoylated. In terms of processing, phosphorylated on serine residues, probably by host PKCdelta and theta.

It localises to the host cell membrane. It is found in the virion. Its subcellular location is the secreted. The protein localises to the host Golgi apparatus membrane. In terms of biological role, factor of infectivity and pathogenicity, required for optimal virus replication. Alters numerous pathways of T-lymphocyte function and down-regulates immunity surface molecules in order to evade host defense and increase viral infectivity. Alters the functionality of other immunity cells, like dendritic cells, monocytes/macrophages and NK cells. Its function is as follows. In infected CD4(+) T-lymphocytes, down-regulates the surface MHC-I, mature MHC-II, CD4, CD28, CCR5 and CXCR4 molecules. Mediates internalization and degradation of host CD4 through the interaction of with the cytoplasmic tail of CD4, the recruitment of AP-2 (clathrin adapter protein complex 2), internalization through clathrin coated pits, and subsequent transport to endosomes and lysosomes for degradation. Diverts host MHC-I molecules to the trans-Golgi network-associated endosomal compartments by an endocytic pathway to finally target them for degradation. MHC-I down-regulation may involve AP-1 (clathrin adapter protein complex 1) or possibly Src family kinase-ZAP70/Syk-PI3K cascade recruited by PACS2. In consequence infected cells are masked for immune recognition by cytotoxic T-lymphocytes. Decreasing the number of immune receptors also prevents reinfection by more HIV particles (superinfection). Down-regulates host SERINC3 and SERINC5 thereby excluding these proteins from the viral particles. Virion infectivity is drastically higher when SERINC3 or SERINC5 are excluded from the viral envelope, because these host antiviral proteins impair the membrane fusion event necessary for subsequent virion penetration. Bypasses host T-cell signaling by inducing a transcriptional program nearly identical to that of anti-CD3 cell activation. Interaction with TCR-zeta chain up-regulates the Fas ligand (FasL). Increasing surface FasL molecules and decreasing surface MHC-I molecules on infected CD4(+) cells send attacking cytotoxic CD8+ T-lymphocytes into apoptosis. Functionally, plays a role in optimizing the host cell environment for viral replication without causing cell death by apoptosis. Protects the infected cells from apoptosis in order to keep them alive until the next virus generation is ready to strike. Inhibits the Fas and TNFR-mediated death signals by blocking MAP3K5/ASK1. Decreases the half-life of TP53, protecting the infected cell against p53-mediated apoptosis. Inhibits the apoptotic signals regulated by the Bcl-2 family proteins through the formation of a Nef/PI3-kinase/PAK2 complex that leads to activation of PAK2 and induces phosphorylation of host BAD. In terms of biological role, extracellular Nef protein targets CD4(+) T-lymphocytes for apoptosis by interacting with CXCR4 surface receptors. The sequence is that of Protein Nef from Homo sapiens (Human).